Reading from the N-terminus, the 325-residue chain is Cyclic AMP-responsive element-binding protein 1 (325 aa).

Composition is skewed to polar residues over residues Met1 to Gly11 and Ala18 to Ala27. Disordered regions lie at residues Met1–Ala27 and Ser92–Ile111. One can recognise a KID domain in the interval Gln85 to Thr144. A Phosphoserine; by CaMK1, CaMK2, CaMK4, PKB/AKT1 or PKB/AKT2, RPS6KA3, RPS6KA4, RPS6KA5 and SGK1 modification is found at Ser117. A Glycyl lysine isopeptide (Lys-Gly) (interchain with G-Cter in SUMO2) cross-link involves residue Lys120. Residues Asp124–Ala146 are disordered. Ser126 is subject to Phosphoserine; by CaMK2. Ser255 bears the Phosphoserine; by HIPK2 mark. A bZIP domain is found at Ala267–Asp325. Residues Arg268 to Lys293 form a basic motif region. Residues Lys269 and Lys288 each participate in a glycyl lysine isopeptide (Lys-Gly) (interchain with G-Cter in SUMO1) cross-link. The tract at residues Leu295–Leu316 is leucine-zipper.

This sequence belongs to the bZIP family. Interacts with PPRC1. Binds DNA as a dimer. This dimer is stabilized by magnesium ions. Interacts, through the bZIP domain, with the coactivators CRTC1/TORC1, CRTC2/TORC2 and CRTC3/TORC3. When phosphorylated on Ser-117, binds CREBBP. Interacts with CREBL2; regulates CREB1 phosphorylation, stability and transcriptional activity. Interacts (phosphorylated form) with TOX3. Interacts with ARRB1. Binds to HIPK2. Interacts with SGK1. Interacts with TSSK4; this interaction facilitates phosphorylation on Ser-117. Forms a complex with KMT2A and CREBBP. Interacts with TOX4; CREB1 is required for full induction of TOX4-dependent activity and the interaction is increased by cAMP and inhibited by insulin. Post-translationally, sumoylated with SUMO1. Sumoylation on Lys-288, but not on Lys-269, is required for nuclear localization of this protein. Sumoylation is enhanced under hypoxia, promoting nuclear localization and stabilization. Stimulated by phosphorylation. Phosphorylation of both Ser-117 and Ser-126 in the SCN regulates the activity of CREB and participates in circadian rhythm generation. Phosphorylation of Ser-117 allows CREBBP binding. Phosphorylated upon calcium influx by CaMK4 and CaMK2 on Ser-117. CaMK4 is much more potent than CaMK2 in activating CREB. Phosphorylated by CaMK2 on Ser-126. Phosphorylation of Ser-126 blocks CREB-mediated transcription even when Ser-117 is phosphorylated. Phosphorylated by CaMK1. Phosphorylation of Ser-255 by HIPK2 in response to genotoxic stress promotes CREB1 activity, facilitating the recruitment of the coactivator CBP. Phosphorylated at Ser-117 by RPS6KA3, RPS6KA4 and RPS6KA5 in response to mitogenic or stress stimuli. CREBL2 positively regulates phosphorylation at Ser-117 thereby stimulating CREB1 transcriptional activity. In liver, phosphorylation is induced by fasting or glucagon in a circadian fashion. Phosphorylated by TSSK4 on Ser-117.

The protein resides in the nucleus. Functionally, phosphorylation-dependent transcription factor that stimulates transcription upon binding to the DNA cAMP response element (CRE), a sequence present in many viral and cellular promoters. Transcription activation is enhanced by the TORC coactivators which act independently of Ser-117 phosphorylation. Involved in different cellular processes including the synchronization of circadian rhythmicity and the differentiation of adipose cells. Regulates the expression of apoptotic and inflammatory response factors in cardiomyocytes in response to ERFE-mediated activation of AKT signaling. This is Cyclic AMP-responsive element-binding protein 1 (CREB1) from Bos taurus (Bovine).